The chain runs to 235 residues: Large ribosomal subunit protein uL1 (235 aa).

The protein belongs to the universal ribosomal protein uL1 family. In terms of assembly, part of the 50S ribosomal subunit.

In terms of biological role, binds directly to 23S rRNA. The L1 stalk is quite mobile in the ribosome, and is involved in E site tRNA release. Functionally, protein L1 is also a translational repressor protein, it controls the translation of the L11 operon by binding to its mRNA. The protein is Large ribosomal subunit protein uL1 of Prochlorococcus marinus (strain AS9601).